The chain runs to 225 residues: Phosphoribosylformylglycinamidine synthase subunit PurQ (225 aa).

In terms of domain architecture, Glutamine amidotransferase type-1 spans 4–225 (RVGVITFPGT…YSVLDSVISA (222 aa)). The Nucleophile role is filled by cysteine 87. Catalysis depends on residues histidine 196 and glutamate 198.

Part of the FGAM synthase complex composed of 1 PurL, 1 PurQ and 2 PurS subunits.

The protein localises to the cytoplasm. The enzyme catalyses N(2)-formyl-N(1)-(5-phospho-beta-D-ribosyl)glycinamide + L-glutamine + ATP + H2O = 2-formamido-N(1)-(5-O-phospho-beta-D-ribosyl)acetamidine + L-glutamate + ADP + phosphate + H(+). The catalysed reaction is L-glutamine + H2O = L-glutamate + NH4(+). It participates in purine metabolism; IMP biosynthesis via de novo pathway; 5-amino-1-(5-phospho-D-ribosyl)imidazole from N(2)-formyl-N(1)-(5-phospho-D-ribosyl)glycinamide: step 1/2. Part of the phosphoribosylformylglycinamidine synthase complex involved in the purines biosynthetic pathway. Catalyzes the ATP-dependent conversion of formylglycinamide ribonucleotide (FGAR) and glutamine to yield formylglycinamidine ribonucleotide (FGAM) and glutamate. The FGAM synthase complex is composed of three subunits. PurQ produces an ammonia molecule by converting glutamine to glutamate. PurL transfers the ammonia molecule to FGAR to form FGAM in an ATP-dependent manner. PurS interacts with PurQ and PurL and is thought to assist in the transfer of the ammonia molecule from PurQ to PurL. The protein is Phosphoribosylformylglycinamidine synthase subunit PurQ of Rhodococcus jostii (strain RHA1).